Here is a 500-residue protein sequence, read N- to C-terminus: ACT domain-containing protein ACR2 (500 aa).

ACT domains follow at residues 39–121 (VVKV…EANN), 136–213 (AIEM…ADPA), 298–373 (IVTV…RVCE), and 376–459 (KLEL…TVGS). A disordered region spans residues 450–478 (EDTKIDTVGSDEPTASASATPQRQPQPHR). Residues 462–474 (PTASASATPQRQP) are compositionally biased toward polar residues.

Its function is as follows. May bind amino acids. This chain is ACT domain-containing protein ACR2, found in Arabidopsis thaliana (Mouse-ear cress).